Here is a 363-residue protein sequence, read N- to C-terminus: UDP-N-acetylglucosamine--N-acetylmuramyl-(pentapeptide) pyrophosphoryl-undecaprenol N-acetylglucosamine transferase (363 aa).

UDP-N-acetyl-alpha-D-glucosamine is bound by residues 14 to 16 (TGG), R171, S200, and Q290.

Belongs to the glycosyltransferase 28 family. MurG subfamily.

It is found in the cell inner membrane. It carries out the reaction di-trans,octa-cis-undecaprenyl diphospho-N-acetyl-alpha-D-muramoyl-L-alanyl-D-glutamyl-meso-2,6-diaminopimeloyl-D-alanyl-D-alanine + UDP-N-acetyl-alpha-D-glucosamine = di-trans,octa-cis-undecaprenyl diphospho-[N-acetyl-alpha-D-glucosaminyl-(1-&gt;4)]-N-acetyl-alpha-D-muramoyl-L-alanyl-D-glutamyl-meso-2,6-diaminopimeloyl-D-alanyl-D-alanine + UDP + H(+). Its pathway is cell wall biogenesis; peptidoglycan biosynthesis. Its function is as follows. Cell wall formation. Catalyzes the transfer of a GlcNAc subunit on undecaprenyl-pyrophosphoryl-MurNAc-pentapeptide (lipid intermediate I) to form undecaprenyl-pyrophosphoryl-MurNAc-(pentapeptide)GlcNAc (lipid intermediate II). In Borreliella burgdorferi (strain ATCC 35210 / DSM 4680 / CIP 102532 / B31) (Borrelia burgdorferi), this protein is UDP-N-acetylglucosamine--N-acetylmuramyl-(pentapeptide) pyrophosphoryl-undecaprenol N-acetylglucosamine transferase.